The sequence spans 1202 residues: Ribonuclease P protein component, mitochondrial (1202 aa).

The transit peptide at 1-122 (MAFKSFIYSK…NNNNNQHRYY (122 aa)) directs the protein to the mitochondrion. Residues 109-134 (NYVNNNNNNQHRYYSTGPTLPTNQYD) form a disordered region. Residues 118 to 134 (QHRYYSTGPTLPTNQYD) are compositionally biased toward polar residues.

Consists of an RNA moiety (RPM1) and the protein component (RPM2). Both are necessary for full enzymatic activity.

The protein localises to the mitochondrion. It catalyses the reaction Endonucleolytic cleavage of RNA, removing 5'-extranucleotides from tRNA precursor.. Functionally, ribonuclease P generates mature tRNA molecules by cleaving their 5'-ends. The sequence is that of Ribonuclease P protein component, mitochondrial (RPM2) from Saccharomyces cerevisiae (strain ATCC 204508 / S288c) (Baker's yeast).